The sequence spans 1968 residues: Signal element on autosome protein 2 (1968 aa).

Low complexity predominate over residues 72-88 (TSSSFSSSLATTTTTSS). Disordered regions lie at residues 72–252 (TSSS…TPTQ) and 271–364 (QVQQ…VQEQ). Basic residues predominate over residues 107-119 (SHHHPSSSHHHHP). Low complexity-rich tracts occupy residues 120–134 (GQQQSSSSSSSSHLQ), 144–165 (HPYYHQQQPQHQHQQAQQYGQA), 219–232 (DQPSSSTGSSLPPL), and 298–338 (LSSI…SSSS). Over residues 346-362 (PNASSSSLIKRQSQDVQ) the composition is skewed to polar residues. Residues 413–440 (YQCPNCNRNLANARNLQRHRQTCGSAQH) form a C2H2-type 1 zinc finger. Disordered stretches follow at residues 451–499 (RSPP…LYSP) and 538–601 (WSRD…TLDP). Positions 452-467 (SPPPCASAPPVAPPTA) are enriched in pro residues. Residues 472 to 482 (FQHHNSTGNLT) show a composition bias toward polar residues. Residues 483 to 498 (LSYSSSSSRHQSSLYS) are compositionally biased toward low complexity. The segment covering 570–594 (PLHHLDSFDSADHRKETPRECHEPD) has biased composition (basic and acidic residues). The segment at 651–672 (FTCEACKKSVSSERSLRRHYNT) adopts a C2H2-type 2; degenerate zinc-finger fold. Disordered stretches follow at residues 681–712 (AASGEERPPTTKRKPATKRPSKKKEASEGPEK) and 785–854 (VTSA…TGNP). Residues 690 to 702 (TTKRKPATKRPSK) show a composition bias toward basic residues. A compositionally biased stretch (low complexity) spans 794–804 (HQLPHQQPQQQ). Acidic residues predominate over residues 812–824 (LLNEQDESADDDG). The segment covering 827–851 (RSSSGTVSNSTTTTTTATTTSSKST) has biased composition (low complexity). The C2H2-type 3; degenerate zinc-finger motif lies at 856-875 (FTCEHCARQLCSMSNLKRHR). Disordered stretches follow at residues 882-905 (ASSSSNSAASRPPSQPSTPATAPA), 975-1069 (GDAL…EHKN), 1083-1227 (RMDA…SPLD), and 1246-1273 (PGPLEQGQSSVDSQSTAEPSPRKASQQA). Low complexity-rich tracts occupy residues 981–1015 (QQHQQKMDQQIQIQFQQQQQQRFQHHQQQQQAGRI), 1023–1046 (ILNQVQNPPQQVQHNQHQNQMLNP), and 1108–1131 (PQRSQAPAPSRQQQQQPPVAYQVQ). A compositionally biased stretch (pro residues) spans 1136 to 1146 (PLPPMQLPPLQ). Residues 1147-1185 (NPHNQQQQHQMLHQSQMNYQQVQQVQQVQHVQQQQNLQN) are compositionally biased toward low complexity. 2 stretches are compositionally biased toward polar residues: residues 1201–1211 (APGNRSRSHSN) and 1251–1273 (QGQSSVDSQSTAEPSPRKASQQA). Residues 1274 to 1297 (YICPECKKTYASRKNVKRHRMAVH) form a C2H2-type 4 zinc finger. Disordered stretches follow at residues 1333 to 1478 (TPDS…ADEE), 1569 to 1608 (SVGLPSLASPGEQFGYQQYSQHPQQHPQQHPQQHPQQQQQ), 1624 to 1671 (HPPM…LTCS), and 1769 to 1822 (ADRQ…PSTN). Residues 1388 to 1403 (ERQEPPKKPVADDHKS) show a composition bias toward basic and acidic residues. 2 stretches are compositionally biased toward pro residues: residues 1407–1421 (PLPPANTIMPPPPPY) and 1429–1445 (LNPPRTALPPLQLPPLQ). Positions 1589–1608 (QHPQQHPQQHPQQHPQQQQQ) are enriched in low complexity. Over residues 1624–1633 (HPPMPVSQQF) the composition is skewed to polar residues. Residues 1668–1694 (LTCSGCKKILGSDYSLRRHRAGCADVQ) form a C2H2-type 5; degenerate zinc finger. Residues 1800-1811 (SSSSSSSTSSAS) are compositionally biased toward low complexity. The C2H2-type 6 zinc finger occupies 1826 to 1858 (HYCQFPECGKNFSSEWNLARHTRESCKMTTRAH).

Expressed in seam cells, intestine cells, pharyngeal muscles and nerve ring neurons.

The protein resides in the nucleus. It localises to the cytoplasm. In terms of biological role, RNA-binding protein, which regulates the expression of proteins required to control developmental timing of events during the L2 to L3 larval stage switch. Binds to the 3'UTR of the transcript of the heterochronic protein lin-28 to post-transcriptionally negatively regulate its expression in certain tissue types in the later larval stages. During larval development, controls the timing of seam cell division and terminal differentiation into adult alae. In vitro, it can also bind to DNA through its first zinc finger. May bind directly or indirectly to the promoter of the sex-determining factor xol-1 to activate its transcription. Its activation of xol-1 transcription controls sex determination and X chromosome dosage compensation to promote male development. Through the negative regulation of lin-28 transcript, it also has a role in the fox-1-sex-1-mediated determination of sexual fate. Acts in the intestine to play a role in regulating adult lifespan. This is Signal element on autosome protein 2 from Caenorhabditis elegans.